We begin with the raw amino-acid sequence, 389 residues long: 5-hydroxytryptamine receptor 1B (389 aa).

The interval 1–27 (MEAAGAPCAPPPPAGSQTGAPPANLSS) is disordered. The Extracellular segment spans residues 1 to 45 (MEAAGAPCAPPPPAGSQTGAPPANLSSAPHNCSAEGYIYQDSVAL). Polar residues predominate over residues 16–27 (SQTGAPPANLSS). Residues Asn-24 and Asn-31 are each glycosylated (N-linked (GlcNAc...) asparagine). A helical membrane pass occupies residues 46-71 (PWKVLLVILLALITLATTLSNAFVIA). At 72–85 (TVYRTRKLHTPANY) the chain is on the cytoplasmic side. A helical membrane pass occupies residues 86-110 (LIASLAVTDLLVSILVMPISTMYTV). The Extracellular portion of the chain corresponds to 111–118 (TGRWTLGQ). A helical transmembrane segment spans residues 119–144 (VVCDLWLSSDITCCTASILHLCVIAL). A disulfide bridge connects residues Cys-121 and Cys-198. Ergotamine contacts are provided by Asp-128 and Thr-133. The short motif at 145–147 (DRY) is the DRY motif; important for ligand-induced conformation changes and signaling element. Residues 145-164 (DRYWAITDAVEYSAKRTPKR) are Cytoplasmic-facing. The helical transmembrane segment at 165-183 (AAVMIALVWVFSISISLPP) threads the bilayer. Topologically, residues 184–204 (FFWRQAKAEEEVSDCVVNTDH) are extracellular. Residue Val-200 coordinates ergotamine. Residues 205–228 (ILYTVYSTVGAFYFPTLLLIALYG) form a helical membrane-spanning segment. Residues 229-314 (RIYVEARSRI…AARERKATKT (86 aa)) lie on the Cytoplasmic side of the membrane. Residues 258 to 271 (DSPGSTSSVTSVNS) are compositionally biased toward polar residues. A disordered region spans residues 258 to 281 (DSPGSTSSVTSVNSRAPDVPSESG). The chain crosses the membrane as a helical span at residues 315–336 (LGIILGAFIVCWLPFFIISLVM). At 337-346 (PICKDACWFH) the chain is on the extracellular side. A helical membrane pass occupies residues 347 to 369 (LAIFDFFTWLGYLNSLINPIIYT). The NPxxY motif; important for ligand-induced conformation changes and signaling motif lies at 364-368 (NPIIY). Topologically, residues 370-389 (MSNEDFKQAFHKLIRFKCAG) are cytoplasmic. Cys-387 carries S-palmitoyl cysteine lipidation.

This sequence belongs to the G-protein coupled receptor 1 family. As to quaternary structure, homodimer. Heterodimer with HTR1D. Post-translationally, phosphorylated. Desensitization of the receptor may be mediated by its phosphorylation. In terms of processing, palmitoylated.

The protein localises to the cell membrane. G-protein coupled receptor for 5-hydroxytryptamine (serotonin). Also functions as a receptor for ergot alkaloid derivatives, various anxiolytic and antidepressant drugs and other psychoactive substances, such as lysergic acid diethylamide (LSD). Ligand binding causes a conformation change that triggers signaling via guanine nucleotide-binding proteins (G proteins) and modulates the activity of downstream effectors, such as adenylate cyclase. HTR1B is coupled to G(i)/G(o) G alpha proteins and mediates inhibitory neurotransmission by inhibiting adenylate cyclase activity. Arrestin family members inhibit signaling via G proteins and mediate activation of alternative signaling pathways. Regulates the release of 5-hydroxytryptamine, dopamine and acetylcholine in the brain, and thereby affects neural activity, nociceptive processing, pain perception, mood and behavior. Besides, plays a role in vasoconstriction of cerebral arteries. This Canis lupus familiaris (Dog) protein is 5-hydroxytryptamine receptor 1B (HTR1B).